Consider the following 409-residue polypeptide: Phospholipase ABHD3 (409 aa).

A helical; Signal-anchor for type II membrane protein transmembrane segment spans residues 26–46; that stretch reads GFFGSGVGLSLILGFSVAYAF. In terms of domain architecture, AB hydrolase-1 spans 140 to 233; the sequence is PTILLLPGLT…MLLLNYLGKI (94 aa). Catalysis depends on charge relay system residues serine 220, aspartate 346, and histidine 375.

It belongs to the AB hydrolase superfamily. AB hydrolase 4 family.

The protein resides in the membrane. It catalyses the reaction a 1,2-diacyl-sn-glycero-3-phosphocholine + H2O = a 1-acyl-sn-glycero-3-phosphocholine + a fatty acid + H(+). It carries out the reaction a 1,2-diacyl-sn-glycero-3-phosphocholine + H2O = a 2-acyl-sn-glycero-3-phosphocholine + a fatty acid + H(+). The catalysed reaction is 1-tetradecanoyl-2-(9Z,12Z-octadecadienoyl)-sn-glycero-3-phosphocholine + H2O = 2-(9Z,12Z-octadecadienoyl)-sn-glycero-3-phosphocholine + tetradecanoate + H(+). The enzyme catalyses 1-tetradecanoyl-2-(9Z,12Z-octadecadienoyl)-sn-glycero-3-phosphocholine + H2O = 1-tetradecanoyl-sn-glycero-3-phosphocholine + (9Z,12Z)-octadecadienoate + H(+). It catalyses the reaction 1-tetradecanoyl-2-(5Z,8Z,11Z,14Z-eicosatetraenoyl)-sn-glycero-3-phosphocholine + H2O = 2-(5Z,8Z,11Z,14Z)-eicosatetraenoyl-sn-glycero-3-phosphocholine + tetradecanoate + H(+). It carries out the reaction 1-tetradecanoyl-2-(4Z,7Z,10Z,13Z,16Z,19Z-docosahexaenoyl)-sn-glycero-3-phosphocholine + H2O = 2-(4Z,7Z,10Z,13Z,16Z,19Z-docosahexaenoyl)-sn-glycero-3-phosphocholine + tetradecanoate + H(+). The catalysed reaction is 1,2-ditetradecanoyl-sn-glycero-3-phosphocholine + H2O = 2-tetradecanoyl-sn-glycero-3-phosphocholine + tetradecanoate + H(+). The enzyme catalyses 1-octadecanoyl-2-acetyl-sn-glycero-3-phosphocholine + H2O = 1-octadecanoyl-sn-glycero-3-phosphocholine + acetate + H(+). It catalyses the reaction 1,2-ditetradecanoyl-sn-glycero-3-phosphocholine + H2O = 1-tetradecanoyl-sn-glycero-3-phosphocholine + tetradecanoate + H(+). It carries out the reaction 1-octadecanoyl-2-pentanoyl-sn-glycero-3-phosphocholine + H2O = pentanoate + 1-octadecanoyl-sn-glycero-3-phosphocholine + H(+). The catalysed reaction is 1-octadecanoyl-2-hexanoyl-sn-glycero-3-phosphocholine + H2O = hexanoate + 1-octadecanoyl-sn-glycero-3-phosphocholine + H(+). The enzyme catalyses 1-octadecanoyl-2-octanoyl-sn-glycero-3-phosphocholine + H2O = 1-octadecanoyl-sn-glycero-3-phosphocholine + octanoate + H(+). It catalyses the reaction 1-octadecanoyl-2-nonanoyl-sn-glycero-3-phosphocholine + H2O = nonanoate + 1-octadecanoyl-sn-glycero-3-phosphocholine + H(+). It carries out the reaction 1-O-hexadecyl-2-nonadioyl-sn-glycero-3-phosphocholine + H2O = nonanedioate + 1-O-hexadecyl-sn-glycero-3-phosphocholine + H(+). The catalysed reaction is 1-hexadecanoyl-2-nonadioyl-sn-glycero-3-phosphocholine + H2O = nonanedioate + 1-hexadecanoyl-sn-glycero-3-phosphocholine + H(+). The enzyme catalyses 1-hexadecanoyl-2-(9-oxononanoyl)-sn-glycero-3-phosphocholine + H2O = 9-oxononanoate + 1-hexadecanoyl-sn-glycero-3-phosphocholine + H(+). It catalyses the reaction 1-hexadecanoyl-2-(5-oxopentanoyl)-sn-glycero-3-phosphocholine + H2O = 5-oxopentanoate + 1-hexadecanoyl-sn-glycero-3-phosphocholine + H(+). It carries out the reaction 1-hexadecanoyl-2-glutaroyl-sn-glycero-3-phosphocholine + H2O = glutarate + 1-hexadecanoyl-sn-glycero-3-phosphocholine + H(+). The catalysed reaction is 1-O-hexadecyl-2-acetyl-sn-glycero-3-phosphocholine + H2O = 1-O-hexadecyl-sn-glycero-3-phosphocholine + acetate + H(+). Phospholipase that may play a role in phospholipids remodeling. May selectively cleave myristate (C14)-containing phosphatidylcholines through its predominant phospholipase 1 activity, cleaving preferentially acyl groups in sn1 position. In parallel, may have a minor phospholipase 2 activity acting on acyl groups in position sn2. In addition to (C14)-containing phosphatidylcholines, may also act on other medium-chain-containing and oxidatively truncated phospholipids. The polypeptide is Phospholipase ABHD3 (Homo sapiens (Human)).